The primary structure comprises 169 residues: Probable chemoreceptor glutamine deamidase CheD (169 aa).

The protein belongs to the CheD family.

It catalyses the reaction L-glutaminyl-[protein] + H2O = L-glutamyl-[protein] + NH4(+). Its function is as follows. Probably deamidates glutamine residues to glutamate on methyl-accepting chemotaxis receptors (MCPs), playing an important role in chemotaxis. The sequence is that of Probable chemoreceptor glutamine deamidase CheD from Solibacter usitatus (strain Ellin6076).